The chain runs to 299 residues: Bifunctional protein FolD (299 aa).

Residues 168–170 (GRS), Ser-193, and Ile-234 contribute to the NADP(+) site.

The protein belongs to the tetrahydrofolate dehydrogenase/cyclohydrolase family. In terms of assembly, homodimer.

It carries out the reaction (6R)-5,10-methylene-5,6,7,8-tetrahydrofolate + NADP(+) = (6R)-5,10-methenyltetrahydrofolate + NADPH. The enzyme catalyses (6R)-5,10-methenyltetrahydrofolate + H2O = (6R)-10-formyltetrahydrofolate + H(+). It functions in the pathway one-carbon metabolism; tetrahydrofolate interconversion. Functionally, catalyzes the oxidation of 5,10-methylenetetrahydrofolate to 5,10-methenyltetrahydrofolate and then the hydrolysis of 5,10-methenyltetrahydrofolate to 10-formyltetrahydrofolate. In Bartonella henselae (strain ATCC 49882 / DSM 28221 / CCUG 30454 / Houston 1) (Rochalimaea henselae), this protein is Bifunctional protein FolD.